The primary structure comprises 118 residues: Ribonuclease P protein component (118 aa).

It belongs to the RnpA family. In terms of assembly, consists of a catalytic RNA component (M1 or rnpB) and a protein subunit.

The enzyme catalyses Endonucleolytic cleavage of RNA, removing 5'-extranucleotides from tRNA precursor.. RNaseP catalyzes the removal of the 5'-leader sequence from pre-tRNA to produce the mature 5'-terminus. It can also cleave other RNA substrates such as 4.5S RNA. The protein component plays an auxiliary but essential role in vivo by binding to the 5'-leader sequence and broadening the substrate specificity of the ribozyme. The sequence is that of Ribonuclease P protein component from Desulfatibacillum aliphaticivorans.